The primary structure comprises 335 residues: GTPase Obg (335 aa).

In terms of domain architecture, Obg spans 4 to 162 (GNFVDYTKIY…ADIVLELKVL (159 aa)). Residues 163 to 332 (ADVGLVGFPN…LKDKLWAMLN (170 aa)) enclose the OBG-type G domain. GTP-binding positions include 169–176 (GFPNAGKS), 194–198 (FTTLK), 216–219 (DIPG), 283–286 (SKCD), and 313–315 (SSI). Positions 176 and 196 each coordinate Mg(2+).

Belongs to the TRAFAC class OBG-HflX-like GTPase superfamily. OBG GTPase family. As to quaternary structure, monomer. Mg(2+) is required as a cofactor.

Its subcellular location is the cytoplasm. Functionally, an essential GTPase which binds GTP, GDP and possibly (p)ppGpp with moderate affinity, with high nucleotide exchange rates and a fairly low GTP hydrolysis rate. Plays a role in control of the cell cycle, stress response, ribosome biogenesis and in those bacteria that undergo differentiation, in morphogenesis control. This is GTPase Obg from Flavobacterium psychrophilum (strain ATCC 49511 / DSM 21280 / CIP 103535 / JIP02/86).